Consider the following 813-residue polypeptide: ATP-dependent zinc metalloprotease FTSH 10, mitochondrial (813 aa).

The N-terminal 86 residues, 1–86 (MIFSKLGSSL…FANPRLRRFF (86 aa)), are a transit peptide targeting the mitochondrion. The disordered stretch occupies residues 93 to 129 (KKNYENYYPKDSKKAPKNEQKSESRDGSKKNENENAG). Positions 94–125 (KNYENYYPKDSKKAPKNEQKSESRDGSKKNEN) are enriched in basic and acidic residues. Residues 139-157 (MLIPLMAIALILSTFSLGS) traverse the membrane as a helical segment. Position 367 to 374 (367 to 374 (GPPGTGKT)) interacts with ATP. His-592 provides a ligand contact to Zn(2+). The active site involves Glu-593. His-596 and Asp-668 together coordinate Zn(2+). A compositionally biased stretch (basic and acidic residues) spans 764–790 (RPFKSGETTNYDRFKSGFEESEKESQK). Residues 764–813 (RPFKSGETTNYDRFKSGFEESEKESQKESVPVKPVEDDGIPPLEPQVVPT) form a disordered region.

In the N-terminal section; belongs to the AAA ATPase family. The protein in the C-terminal section; belongs to the peptidase M41 family. It depends on Zn(2+) as a cofactor.

It localises to the mitochondrion inner membrane. Functionally, probable ATP-dependent zinc metallopeptidase. Involved in the assembly and/or stability of the complexes I and V of the mitochondrial oxidative phosphorylation system. The chain is ATP-dependent zinc metalloprotease FTSH 10, mitochondrial (FTSH10) from Arabidopsis thaliana (Mouse-ear cress).